Here is a 298-residue protein sequence, read N- to C-terminus: Tyrosine recombinase XerC (298 aa).

Positions 2–88 (TDLHTDVERY…ALRSFFDWLV (87 aa)) constitute a Core-binding (CB) domain. Positions 109–288 (HLPKNIDVDD…DFQHLASVYD (180 aa)) constitute a Tyr recombinase domain. Catalysis depends on residues Arg148, Lys172, His240, Arg243, and His266. Tyr275 functions as the O-(3'-phospho-DNA)-tyrosine intermediate in the catalytic mechanism.

The protein belongs to the 'phage' integrase family. XerC subfamily. As to quaternary structure, forms a cyclic heterotetrameric complex composed of two molecules of XerC and two molecules of XerD, in which XerC interacts with XerD via its C-terminal region, XerD interacts with XerC via its C-terminal region and so on.

Its subcellular location is the cytoplasm. FtsK may regulate the catalytic switch between XerC and XerD in the heterotetrameric complex during the two steps of the recombination process. Site-specific tyrosine recombinase, which acts by catalyzing the cutting and rejoining of the recombining DNA molecules. Binds cooperatively to specific DNA consensus sequences that are separated from XerD binding sites by a short central region, forming the heterotetrameric XerC-XerD complex that recombines DNA substrates. The complex is essential to convert dimers of the bacterial chromosome into monomers to permit their segregation at cell division. It also contributes to the segregational stability of plasmids. In the complex XerC specifically exchanges the top DNA strands. This Shigella flexneri serotype 5b (strain 8401) protein is Tyrosine recombinase XerC.